A 288-amino-acid polypeptide reads, in one-letter code: Protein CREG2 (288 aa).

A signal peptide spans 1-31 (MSLSGRERPAWPGSRLSWLLCCSALLSPAAG). The disordered stretch occupies residues 78–100 (AHKEDTHLRPRGSARARPAPAAR). An N-linked (GlcNAc...) asparagine glycan is attached at N164.

Belongs to the CREG family. In terms of tissue distribution, brain specific.

Its subcellular location is the secreted. The polypeptide is Protein CREG2 (Creg2) (Mus musculus (Mouse)).